A 94-amino-acid polypeptide reads, in one-letter code: Pyrimidine/purine nucleoside phosphorylase (94 aa).

This sequence belongs to the nucleoside phosphorylase PpnP family.

The enzyme catalyses a purine D-ribonucleoside + phosphate = a purine nucleobase + alpha-D-ribose 1-phosphate. It catalyses the reaction adenosine + phosphate = alpha-D-ribose 1-phosphate + adenine. It carries out the reaction cytidine + phosphate = cytosine + alpha-D-ribose 1-phosphate. The catalysed reaction is guanosine + phosphate = alpha-D-ribose 1-phosphate + guanine. The enzyme catalyses inosine + phosphate = alpha-D-ribose 1-phosphate + hypoxanthine. It catalyses the reaction thymidine + phosphate = 2-deoxy-alpha-D-ribose 1-phosphate + thymine. It carries out the reaction uridine + phosphate = alpha-D-ribose 1-phosphate + uracil. The catalysed reaction is xanthosine + phosphate = alpha-D-ribose 1-phosphate + xanthine. In terms of biological role, catalyzes the phosphorolysis of diverse nucleosides, yielding D-ribose 1-phosphate and the respective free bases. Can use uridine, adenosine, guanosine, cytidine, thymidine, inosine and xanthosine as substrates. Also catalyzes the reverse reactions. The polypeptide is Pyrimidine/purine nucleoside phosphorylase (Shigella dysenteriae serotype 1 (strain Sd197)).